A 476-amino-acid polypeptide reads, in one-letter code: MKLLFAGSECAPFFKTGGLGDVMGALPKTIAKTTDNDVRVVLPFFTGMAEEYKSQLSFVTSFYVKVGWRDQYCGVLKLEMDNVTYYFIDNLYYFDRPGLYGYYDEGERWAFFQQAIIEMLEKIGFIPDILHVNDYHTAFIPFLLKEKYGWINAYQSIKTVLTIHNLQFQGEYGREVLGELFNLDASYYDDGTVRFDTAVNFMKTGILYADKVNTVSPTYASEIQTEAFGQGLDEILRMHNWKLRGILNGIDYERNNPATDKNLVANYSAKKLKGKVKDKLALQKEFGLPQRKDVPVIAMVSRLTAQKGFQLVVSEMQNLVQFDVQVIVLGTGDANFEHDFRYFADTYPDKVGAAITFDVGLAQRIYAGADMFLMPSAFEPCGLSQMISMRYGTLPIVHQIGGLQDSVQPFNPVTGEGTGFGFHDFSGFYMMQEIQEALRLYAESVAWTKVVKQAMSQDFSWETASQEYLNMYNELV.

Lys15 serves as a coordination point for ADP-alpha-D-glucose.

The protein belongs to the glycosyltransferase 1 family. Bacterial/plant glycogen synthase subfamily.

It catalyses the reaction [(1-&gt;4)-alpha-D-glucosyl](n) + ADP-alpha-D-glucose = [(1-&gt;4)-alpha-D-glucosyl](n+1) + ADP + H(+). It participates in glycan biosynthesis; glycogen biosynthesis. Functionally, synthesizes alpha-1,4-glucan chains using ADP-glucose. The polypeptide is Glycogen synthase (Ligilactobacillus salivarius (strain UCC118) (Lactobacillus salivarius)).